Consider the following 245-residue polypeptide: tRNA1(Val) (adenine(37)-N6)-methyltransferase (245 aa).

The protein belongs to the methyltransferase superfamily. tRNA (adenine-N(6)-)-methyltransferase family.

It is found in the cytoplasm. It catalyses the reaction adenosine(37) in tRNA1(Val) + S-adenosyl-L-methionine = N(6)-methyladenosine(37) in tRNA1(Val) + S-adenosyl-L-homocysteine + H(+). Functionally, specifically methylates the adenine in position 37 of tRNA(1)(Val) (anticodon cmo5UAC). This chain is tRNA1(Val) (adenine(37)-N6)-methyltransferase, found in Salmonella paratyphi A (strain ATCC 9150 / SARB42).